A 592-amino-acid polypeptide reads, in one-letter code: Probable auxin efflux carrier component 1c (592 aa).

The Extracellular segment spans residues M1–D6. A helical transmembrane segment spans residues F7–S27. The Cytoplasmic portion of the chain corresponds to V28–Q38. The helical transmembrane segment at C39–I59 threads the bilayer. (indol-3-yl)acetate is bound at residue V51. Residues S60–R70 are Extracellular-facing. A helical membrane pass occupies residues F71–H91. Over L92 to W100 the chain is Cytoplasmic. Residues T101 to L121 form a helical membrane-spanning segment. N112 and L114 together coordinate (indol-3-yl)acetate. Over K122–S131 the chain is Extracellular. The helical transmembrane segment at L132–F152 threads the bilayer. Y145 contributes to the (indol-3-yl)acetate binding site. Residues E153–S452 lie on the Cytoplasmic side of the membrane. Disordered stretches follow at residues R214 to T236 and G282 to E331. Polar residues predominate over residues G224 to T236. Residues A309–P318 are compositionally biased toward pro residues. A helical membrane pass occupies residues L453–I473. Residues L474 to S476 are Extracellular-facing. Residues I477 to A497 form a helical membrane-spanning segment. Residues L498 to T511 lie on the Cytoplasmic side of the membrane. Residues F512–V532 traverse the membrane as a helical segment. At G533–T537 the chain is on the extracellular side. A helical transmembrane segment spans residues L538–A558. Residues I552 and V553 each coordinate (indol-3-yl)acetate. Residues K559–A571 lie on the Cytoplasmic side of the membrane. Residues V572 to L592 form a helical membrane-spanning segment.

It belongs to the auxin efflux carrier (TC 2.A.69.1) family. In terms of assembly, homodimer. As to expression, expressed at low levels in roots and leaves. Expressed in roots, stem bases, stems, leaves and young panicles.

The protein localises to the membrane. May act as a component of the auxin efflux carrier. This Oryza sativa subsp. japonica (Rice) protein is Probable auxin efflux carrier component 1c.